Consider the following 3206-residue polypeptide: Highly reducing polyketide synthase ltbA (3206 aa).

The 430-residue stretch at 5–434 folds into the Ketosynthase family 3 (KS3) domain; it reads PAPIAIIGVG…GTNCHVILEA (430 aa). Active-site for beta-ketoacyl synthase activity residues include cysteine 179, histidine 314, and histidine 354. Residues 441 to 463 are compositionally biased toward polar residues; sequence PTGTNGIKTNGTRINGIKTNGAD. A disordered region spans residues 441–472; sequence PTGTNGIKTNGTRINGIKTNGADTNERESMKN. The segment at 575–890 is malonyl-CoA:ACP transacylase (MAT) domain; the sequence is VFSGQGAQWH…EYLSALQRNT (316 aa). Residues 958-1098 form an N-terminal hotdog fold region; it reads HDLLGLFDPA…GEITVEYETD (141 aa). The interval 958–1278 is dehydratase (DH) domain; that stretch reads HDLLGLFDPA…LLVNLRAIGE (321 aa). The 327-residue stretch at 958–1284 folds into the PKS/mFAS DH domain; that stretch reads HDLLGLFDPA…AIGETREDED (327 aa). Histidine 990 acts as the Proton acceptor; for dehydratase activity in catalysis. Residues 1128–1284 form a C-terminal hotdog fold region; that stretch reads DTDMTKSEFY…AIGETREDED (157 aa). The Proton donor; for dehydratase activity role is filled by aspartate 1193. The tract at residues 1450–1640 is methyltransferase (CMet) domain; the sequence is ESGILVGPYE…LARNGFGGIH (191 aa). Residues 1871–2185 form an enoyl reductase (ER) domain region; the sequence is LLSSLRFVDD…RKHTGKVVLQ (315 aa). Positions 2208–2395 are ketoreductase (KR) domain; it reads GTYVAAGGLG…SVDAHGALKE (188 aa). The 79-residue stretch at 2499–2577 folds into the Carrier domain; sequence EEAEQLIRDA…ALAATVASRS (79 aa). Serine 2537 is modified (O-(pantetheine 4'-phosphoryl)serine). A disordered region spans residues 2584–2611; it reads IRHSSRLQEATTQAENKDAPKNEKEGPS. Residues 2598 to 2610 are compositionally biased toward basic and acidic residues; that stretch reads ENKDAPKNEKEGP. The tract at residues 2994 to 3206 is carnitine O-acyltransferase (cAT) domain; it reads HLIPSFGKAV…IKTIIQAGQE (213 aa).

Pantetheine 4'-phosphate serves as cofactor.

It functions in the pathway secondary metabolite biosynthesis. Highly reducing polyketide synthase; part of the gene cluster that mediates the biosynthesis of luteodienoside A, a glycosylated polyketide consisting of an unusual 1-O-beta-D-glucopyranosyl-myo-inositol (glucinol) ester of 3-hydroxy-2,2,4-trimethylocta-4,6-dienoic acid. LtbA produces the trimethylated polyketide chain from acetyl-CoA, malonyl-CoA and S-adenosylmethionine (SAM). The ltbA carnitine O-acyltransferase (cAT) domain then uses glucinol produced by the glycosyltransferase ltbB as an offloading substrate to release luteodienoside A. Furthermore, the PKS C-methyltransferase (CMeT) domain is capable of catalysing gem-dimethylation of the 3-hydroxy-2,2,4-trimethylocta-4,6-dienoic acid intermediate, without requiring reversible product release and recapture by the cAT domain. Since ltbA and ltbB are sufficient for the biosynthesis of luteodienoside A, the functions of the methyltransferase ltbC and the FAD-binding monooxygenase ltbD within the pathway remain obscur. This is Highly reducing polyketide synthase ltbA from Aspergillus luteorubrus.